The sequence spans 520 residues: RING-type E3 ubiquitin-protein ligase PPIL2 (520 aa).

The 74-residue stretch at 35–108 (RRLPFDHCSL…GKYHCPVLFT (74 aa)) folds into the U-box domain. A coiled-coil region spans residues 197–217 (LKNTNAETRETLQELYKEFKG). Residue lysine 216 forms a Glycyl lysine isopeptide (Lys-Gly) (interchain with G-Cter in SUMO2) linkage. One can recognise a PPIase cyclophilin-type domain in the interval 278–433 (KKGYVRLHTN…EEIRIDATTV (156 aa)). The tract at residues 456–520 (APETKVKSSQ…SRGFGDFSSW (65 aa)) is disordered. Positions 463–474 (SSQPQAGSQGPQ) are enriched in low complexity. Serine 470 carries the phosphoserine modification. An N6-acetyllysine modification is found at lysine 482.

This sequence belongs to the cyclophilin-type PPIase family. PPIL2 subfamily. In terms of assembly, component of the minor spliceosome, which splices U12-type introns. Within this complex, interacts with PRPF8/PRP8, EFTUD2/SNU114 and PLRG1. Interacts with isoform 2 of BSG. Interacts (via the PPIase cyclophilin-type domain) with CRNKL1; they may form a trimeric complex with HSP90. As to expression, highest expression in thymus, pancreas and testis. Also detected in heart, placenta, lung, liver, skeletal muscle, kidney, spleen, prostate, ovary, small intestine and colon. Poorly detected in brain and leukocytes. Strong protein expression in lymph node (cortical, paracortical and medullar regions), thyroid (follicular epithelial cells), testis (developing spermatozoa), stomach (cells lining the gastric pit), pancreas, kidney (proximal and distal-tubule cells and collecting duct cells but not in glomeruli), endometrium and colon (goblet cells). Moderate protein expression in spleen, prostate (epithelium and squamous cell carcinomas), placenta and adrenal gland. Weak protein expression in liver, heart, breast, ovary, and lung. No protein expression in brain and bladder. High protein expression in most lymphomas and melanomas.

It localises to the nucleus. It catalyses the reaction S-ubiquitinyl-[E2 ubiquitin-conjugating enzyme]-L-cysteine + [acceptor protein]-L-lysine = [E2 ubiquitin-conjugating enzyme]-L-cysteine + N(6)-ubiquitinyl-[acceptor protein]-L-lysine.. The protein operates within protein modification; protein ubiquitination. Functionally, has a ubiquitin-protein ligase activity acting as an E3 ubiquitin protein ligase or as an ubiquitin-ubiquitin ligase promoting elongation of ubiquitin chains on substrates. By mediating 'Lys-48'-linked polyubiquitination of proteins could target them for proteasomal degradation. May also function as a chaperone, playing a role in transport to the cell membrane of BSG/Basigin for instance. Probable inactive PPIase with no peptidyl-prolyl cis-trans isomerase activity. As a component of the minor spliceosome, involved in the splicing of U12-type introns in pre-mRNAs. This chain is RING-type E3 ubiquitin-protein ligase PPIL2, found in Homo sapiens (Human).